The sequence spans 558 residues: Armadillo repeat-containing X-linked protein 5 (558 aa).

Basic and acidic residues-rich tracts occupy residues 1-14 and 139-156; these read MVDS…RGKA and KSHD…REET. Disordered stretches follow at residues 1-35 and 139-165; these read MVDS…GKTQ and KSHD…SSDE. Residues 300-339 form an ARM 1 repeat; sequence CKSRGFSLEPKEFDKLVALLKLTKDPFIHEIATMIMGISP. Residues 369 to 388 are disordered; it reads HPGALSMVDDSSESSEEPKS. ARM repeat units follow at residues 422–461, 463–503, and 520–558; these read IKFE…CLSK, HANT…NINF, and SELI…ILKL.

This sequence belongs to the eutherian X-chromosome-specific Armcx family.

In Homo sapiens (Human), this protein is Armadillo repeat-containing X-linked protein 5 (ARMCX5).